Consider the following 151-residue polypeptide: Large ribosomal subunit protein uL13 (151 aa).

Residues 129 to 151 form a disordered region; the sequence is SNHPHQAQKPETLTINTIPGGNN.

The protein belongs to the universal ribosomal protein uL13 family. As to quaternary structure, part of the 50S ribosomal subunit.

Its function is as follows. This protein is one of the early assembly proteins of the 50S ribosomal subunit, although it is not seen to bind rRNA by itself. It is important during the early stages of 50S assembly. The sequence is that of Large ribosomal subunit protein uL13 from Gloeothece citriformis (strain PCC 7424) (Cyanothece sp. (strain PCC 7424)).